The sequence spans 320 residues: Thymidylate synthase (320 aa).

DUMP-binding positions include Arg27 and 182 to 183 (RR). The active-site Nucleophile is the Cys202. DUMP is bound by residues 222 to 225 (RSAD), Asn233, and 263 to 265 (HIY). Asp225 contributes to the (6R)-5,10-methylene-5,6,7,8-tetrahydrofolate binding site. Ala319 is a binding site for (6R)-5,10-methylene-5,6,7,8-tetrahydrofolate.

The protein belongs to the thymidylate synthase family. Bacterial-type ThyA subfamily. As to quaternary structure, homodimer.

Its subcellular location is the cytoplasm. It carries out the reaction dUMP + (6R)-5,10-methylene-5,6,7,8-tetrahydrofolate = 7,8-dihydrofolate + dTMP. It participates in pyrimidine metabolism; dTTP biosynthesis. Catalyzes the reductive methylation of 2'-deoxyuridine-5'-monophosphate (dUMP) to 2'-deoxythymidine-5'-monophosphate (dTMP) while utilizing 5,10-methylenetetrahydrofolate (mTHF) as the methyl donor and reductant in the reaction, yielding dihydrofolate (DHF) as a by-product. This enzymatic reaction provides an intracellular de novo source of dTMP, an essential precursor for DNA biosynthesis. The sequence is that of Thymidylate synthase from Limosilactobacillus reuteri (strain DSM 20016) (Lactobacillus reuteri).